A 541-amino-acid chain; its full sequence is Eukaryotic translation initiation factor 3 subunit D-1 (541 aa).

The interval 98–136 (VQKPPHQRGRFRNMRGRGGRGRNPRGGLNNHHHHGMTTL) is disordered. Positions 100 to 120 (KPPHQRGRFRNMRGRGGRGRN) are enriched in basic residues.

The protein belongs to the eIF-3 subunit D family. In terms of assembly, component of the eukaryotic translation initiation factor 3 (eIF-3) complex. The eIF-3 complex interacts with pix.

It localises to the cytoplasm. MRNA cap-binding component of the eukaryotic translation initiation factor 3 (eIF-3) complex, which is involved in protein synthesis of a specialized repertoire of mRNAs and, together with other initiation factors, stimulates binding of mRNA and methionyl-tRNAi to the 40S ribosome. The eIF-3 complex specifically targets and initiates translation of a subset of mRNAs involved in cell proliferation. In the eIF-3 complex, eif3d specifically recognizes and binds the 7-methylguanosine cap of a subset of mRNAs. This chain is Eukaryotic translation initiation factor 3 subunit D-1, found in Drosophila persimilis (Fruit fly).